Consider the following 132-residue polypeptide: Small ribosomal subunit protein uS8 (132 aa).

It belongs to the universal ribosomal protein uS8 family. As to quaternary structure, part of the 30S ribosomal subunit. Contacts proteins S5 and S12.

One of the primary rRNA binding proteins, it binds directly to 16S rRNA central domain where it helps coordinate assembly of the platform of the 30S subunit. This Borreliella burgdorferi (strain ZS7) (Borrelia burgdorferi) protein is Small ribosomal subunit protein uS8.